The following is a 700-amino-acid chain: Transketolase (700 aa).

Position 2 is an N-acetylthreonine (T2). H45 contributes to the substrate binding site. Thiamine diphosphate-binding positions include T48, H85, 133 to 135 (GPL), and L135. D177 is a Mg(2+) binding site. The thiamine diphosphate site is built by G178 and N207. The Mg(2+) site is built by N207 and I209. Residues H283, R378, and S405 each coordinate substrate. Thiamine diphosphate is bound at residue H283. E441 acts as the Proton donor in catalysis. F467 is a thiamine diphosphate binding site. Residues H491, D499, and R552 each contribute to the substrate site.

The protein belongs to the transketolase family. In terms of assembly, homodimer. Mg(2+) is required as a cofactor. Requires Ca(2+) as cofactor. The cofactor is Mn(2+). Co(2+) serves as cofactor. It depends on thiamine diphosphate as a cofactor.

The catalysed reaction is D-sedoheptulose 7-phosphate + D-glyceraldehyde 3-phosphate = aldehydo-D-ribose 5-phosphate + D-xylulose 5-phosphate. Functionally, catalyzes the reversible transfer of a two-carbon ketol group from sedoheptulose-7-phosphate to glyceraldehyde-3-phosphate, producing xylulose-5-phosphate and ribose-5-phosphate. Catalyzes the transfer of a two-carbon ketol group from a ketose donor to an aldose acceptor, via a covalent intermediate with the cofactor thiamine pyrophosphate. The sequence is that of Transketolase (tkt) from Mycobacterium tuberculosis (strain ATCC 25618 / H37Rv).